A 433-amino-acid polypeptide reads, in one-letter code: 3-phosphoshikimate 1-carboxyvinyltransferase (433 aa).

Residues lysine 21, serine 22, and arginine 26 each contribute to the 3-phosphoshikimate site. Lysine 21 lines the phosphoenolpyruvate pocket. Residues glycine 92 and arginine 120 each contribute to the phosphoenolpyruvate site. Residues serine 166, glutamine 168, aspartate 317, and lysine 344 each contribute to the 3-phosphoshikimate site. Glutamine 168 contacts phosphoenolpyruvate. Catalysis depends on aspartate 317, which acts as the Proton acceptor. Positions 348 and 391 each coordinate phosphoenolpyruvate.

Belongs to the EPSP synthase family. In terms of assembly, monomer.

Its subcellular location is the cytoplasm. It carries out the reaction 3-phosphoshikimate + phosphoenolpyruvate = 5-O-(1-carboxyvinyl)-3-phosphoshikimate + phosphate. The protein operates within metabolic intermediate biosynthesis; chorismate biosynthesis; chorismate from D-erythrose 4-phosphate and phosphoenolpyruvate: step 6/7. Catalyzes the transfer of the enolpyruvyl moiety of phosphoenolpyruvate (PEP) to the 5-hydroxyl of shikimate-3-phosphate (S3P) to produce enolpyruvyl shikimate-3-phosphate and inorganic phosphate. This Caldicellulosiruptor saccharolyticus (strain ATCC 43494 / DSM 8903 / Tp8T 6331) protein is 3-phosphoshikimate 1-carboxyvinyltransferase.